A 163-amino-acid polypeptide reads, in one-letter code: Phosphopantetheine adenylyltransferase (163 aa).

S9 contributes to the substrate binding site. ATP is bound by residues 9-10 and H17; that span reads SF. Residues K41, L73, and K87 each contribute to the substrate site. ATP-binding positions include 88–90, E98, and 124–130; these read GLR and YTYVSST.

It belongs to the bacterial CoaD family. Homohexamer. It depends on Mg(2+) as a cofactor.

It localises to the cytoplasm. It carries out the reaction (R)-4'-phosphopantetheine + ATP + H(+) = 3'-dephospho-CoA + diphosphate. It functions in the pathway cofactor biosynthesis; coenzyme A biosynthesis; CoA from (R)-pantothenate: step 4/5. Reversibly transfers an adenylyl group from ATP to 4'-phosphopantetheine, yielding dephospho-CoA (dPCoA) and pyrophosphate. The sequence is that of Phosphopantetheine adenylyltransferase from Fusobacterium nucleatum subsp. nucleatum (strain ATCC 25586 / DSM 15643 / BCRC 10681 / CIP 101130 / JCM 8532 / KCTC 2640 / LMG 13131 / VPI 4355).